The primary structure comprises 194 residues: 7-methyl-GTP pyrophosphatase (194 aa).

Catalysis depends on aspartate 69, which acts as the Proton acceptor.

The protein belongs to the Maf family. YceF subfamily. A divalent metal cation serves as cofactor.

It is found in the cytoplasm. It catalyses the reaction N(7)-methyl-GTP + H2O = N(7)-methyl-GMP + diphosphate + H(+). Functionally, nucleoside triphosphate pyrophosphatase that hydrolyzes 7-methyl-GTP (m(7)GTP). May have a dual role in cell division arrest and in preventing the incorporation of modified nucleotides into cellular nucleic acids. The polypeptide is 7-methyl-GTP pyrophosphatase (yceF1) (Salmonella paratyphi A (strain ATCC 9150 / SARB42)).